The sequence spans 673 residues: DNA ligase (673 aa).

NAD(+)-binding positions include Asp-33 to Asp-37, Ser-82 to Leu-83, and Glu-115. The active-site N6-AMP-lysine intermediate is Lys-117. NAD(+)-binding residues include Arg-138, Glu-175, Lys-292, and Lys-316. 4 residues coordinate Zn(2+): Cys-410, Cys-413, Cys-428, and Cys-434. One can recognise a BRCT domain in the interval Val-593 to Leu-673.

It belongs to the NAD-dependent DNA ligase family. LigA subfamily. The cofactor is Mg(2+). It depends on Mn(2+) as a cofactor.

The catalysed reaction is NAD(+) + (deoxyribonucleotide)n-3'-hydroxyl + 5'-phospho-(deoxyribonucleotide)m = (deoxyribonucleotide)n+m + AMP + beta-nicotinamide D-nucleotide.. Functionally, DNA ligase that catalyzes the formation of phosphodiester linkages between 5'-phosphoryl and 3'-hydroxyl groups in double-stranded DNA using NAD as a coenzyme and as the energy source for the reaction. It is essential for DNA replication and repair of damaged DNA. This chain is DNA ligase, found in Pasteurella multocida (strain Pm70).